We begin with the raw amino-acid sequence, 121 residues long: Large ribosomal subunit protein bL12 (121 aa).

The protein belongs to the bacterial ribosomal protein bL12 family. In terms of assembly, homodimer. Part of the ribosomal stalk of the 50S ribosomal subunit. Forms a multimeric L10(L12)X complex, where L10 forms an elongated spine to which 2 to 4 L12 dimers bind in a sequential fashion. Binds GTP-bound translation factors.

Forms part of the ribosomal stalk which helps the ribosome interact with GTP-bound translation factors. Is thus essential for accurate translation. This chain is Large ribosomal subunit protein bL12, found in Klebsiella pneumoniae (strain 342).